Consider the following 648-residue polypeptide: EF-hand domain-containing protein 1 (648 aa).

The segment at 1-45 (MGTNPVHGLPFLPGSSFTDSTKTAFHRSQTLNYRNGYAVVRRPTM) is required for its localization in the mitotic spindle and interaction with alpha-tubulin. DM10 domains lie at 93–198 (DKKV…ESQG), 239–359 (DKQV…KDKF), and 416–520 (DNKV…ESNA). Residues 582 to 617 (SYKENLRETFQMYDKDESGYVDRETFFKICETLNVP) enclose the EF-hand domain.

As to quaternary structure, microtubule inner protein component of sperm flagellar doublet microtubules. Interacts with the C-terminus of CACNA1E. Interacts with alpha-tubulin. In terms of tissue distribution, expressed in adult brain including hippocampus, cerebellum, cerebral cortex, thalamus, hypothalamus, amygdala and upper brainstem. Expressed in soma and dentrites of pyramidal neurons of the hippocampal CA1 region, pyramidal neurons of the cerebral cortex and Purkinje cells of cerebellum. Highly expressed in testis, trachea, and oviduct, moderately in lung, and slightly in brain. Highly expressed in sperm flagella and tracheal cilia (at protein level).

It is found in the cytoplasm. It localises to the cytoskeleton. The protein resides in the cilium axoneme. The protein localises to the flagellum axoneme. Its subcellular location is the microtubule organizing center. It is found in the centrosome. It localises to the spindle. The protein resides in the spindle pole. In terms of biological role, microtubule inner protein (MIP) part of the dynein-decorated doublet microtubules (DMTs) in cilia axoneme, which is required for motile cilia beating. Microtubule-associated protein which regulates cell division and neuronal migration during cortical development. Necessary for radial and tangential cell migration during brain development, possibly acting as a regulator of cell morphology and process formation during migration. May enhance calcium influx through CACNA1E and stimulate programmed cell death. Overexpression of EFHC1 in hippocampal primary culture neurons induced apoptosis. In Mus musculus (Mouse), this protein is EF-hand domain-containing protein 1 (Efhc1).